A 185-amino-acid chain; its full sequence is Ribosome-recycling factor (185 aa).

This sequence belongs to the RRF family.

It localises to the cytoplasm. In terms of biological role, responsible for the release of ribosomes from messenger RNA at the termination of protein biosynthesis. May increase the efficiency of translation by recycling ribosomes from one round of translation to another. This Vibrio vulnificus (strain YJ016) protein is Ribosome-recycling factor.